Consider the following 440-residue polypeptide: D-serine dehydratase (440 aa).

Residue lysine 116 is modified to N6-(pyridoxal phosphate)lysine.

The protein belongs to the serine/threonine dehydratase family. DsdA subfamily. As to quaternary structure, monomer. Requires pyridoxal 5'-phosphate as cofactor.

The enzyme catalyses D-serine = pyruvate + NH4(+). This is D-serine dehydratase from Salmonella arizonae (strain ATCC BAA-731 / CDC346-86 / RSK2980).